Reading from the N-terminus, the 2049-residue chain is Kinetochore-associated protein rod-1 (2049 aa).

Component of the RZZ complex composed of rod-1, czw-1 and zwl-1. Interacts (via N-terminus) with NDC80 complex component ndc-80.

The protein resides in the chromosome. The protein localises to the centromere. It localises to the kinetochore. Its subcellular location is the cytoplasm. It is found in the cytoskeleton. The protein resides in the spindle. Functionally, essential component of the mitotic checkpoint, which prevents cells from prematurely exiting mitosis. Required for chromosome segregation, the assembly of the dynein-dynactin and mdf-1-mdf-2 complexes onto kinetochores and spindle pole separation. Plays a role in nuclear envelope breakdown. Its function related to the spindle assembly machinery and kinetochore-microtubule attachments likely depends on its association in the mitotic RZZ complex. The RZZ complex recruits the spindly-like protein spdl-1 to kinetochores. To prevent irregular chromosome segregation, the complex also inhibits the attachment of the kinetochore-associated NDC80 complex to microtubules. The recruitment of spdl-1 to kinetochores relieves this inhibition. Required for embryonic development. This Caenorhabditis elegans protein is Kinetochore-associated protein rod-1.